A 468-amino-acid chain; its full sequence is 6-phospho-beta-galactosidase (468 aa).

The D-galactose 6-phosphate site is built by Gln19, His116, Asn159, Glu160, and Asn297. The active-site Proton donor is the Glu160. Glu375 serves as the catalytic Nucleophile. Ser428, Trp429, Lys435, and Tyr437 together coordinate D-galactose 6-phosphate.

Belongs to the glycosyl hydrolase 1 family.

The enzyme catalyses a 6-phospho-beta-D-galactoside + H2O = D-galactose 6-phosphate + an alcohol. Its pathway is carbohydrate metabolism; lactose degradation; D-galactose 6-phosphate and beta-D-glucose from lactose 6-phosphate: step 1/1. The chain is 6-phospho-beta-galactosidase from Streptococcus mutans serotype c (strain ATCC 700610 / UA159).